A 74-amino-acid chain; its full sequence is Protein A30 homolog (74 aa).

It belongs to the chordopoxvirinae A30 family. In terms of assembly, interacts with protein G7; the interaction stabilizes both proteins. Phosphorylated by viral F10 kinase.

Required for the association between the dense viroplasm and the viral membranes to form the mature virion (MV). This is Protein A30 homolog from Fowlpox virus (strain NVSL) (FPV).